We begin with the raw amino-acid sequence, 271 residues long: Oligodendrocyte transcription factor 1 (271 aa).

The tract at residues 38-117 (YRQPPSSSSS…RKINSRERKR (80 aa)) is disordered. Over residues 43–61 (SSSSSSTSSTSSTSSSSTT) the composition is skewed to low complexity. The 60-residue stretch at 105–164 (QLRRKINSRERKRMQDLNLAMDALREVILPYSAAHCQGAPGRKLSKIATLLLARNYILLL) folds into the bHLH domain.

As to expression, expressed in the brain, in oligodendrocytes. Strongly expressed in oligodendrogliomas, while expression is weak to moderate in astrocytomas. Expression in glioblastomas is highly variable.

Its subcellular location is the nucleus. In terms of biological role, promotes formation and maturation of oligodendrocytes, especially within the brain. Cooperates with OLIG2 to establish the pMN domain of the embryonic neural tube. This is Oligodendrocyte transcription factor 1 (OLIG1) from Homo sapiens (Human).